Reading from the N-terminus, the 221-residue chain is Oxaloacetate tautomerase FAHD1, mitochondrial (221 aa).

Residues 1–24 constitute a mitochondrion transit peptide; the sequence is MAASRPLSRFWEWGKNIVCVGRNY. Phosphoserine is present on serine 37. The Mg(2+) site is built by glutamate 68, glutamate 70, and aspartate 99. Lysine 110 carries the post-translational modification N6-acetyllysine. At lysine 112 the chain carries N6-succinyllysine.

Belongs to the FAH family. Homodimer. Requires Mg(2+) as cofactor. Mn(2+) is required as a cofactor.

The protein resides in the mitochondrion. Its subcellular location is the cytoplasm. It localises to the cytosol. The enzyme catalyses oxaloacetate = enol-oxaloacetate. It catalyses the reaction oxaloacetate + H(+) = pyruvate + CO2. It carries out the reaction a 3-acylpyruvate + H2O = a carboxylate + pyruvate + H(+). The catalysed reaction is acetylpyruvate + H2O = acetate + pyruvate + H(+). The enzyme catalyses 3-fumarylpyruvate + H2O = fumarate + pyruvate + H(+). Its activity is regulated as follows. Oxaloacetate decarboxylation is competitively inhibited by oxalate. In terms of biological role, tautomerase that converts enol-oxaloacetate, a strong inhibitor of succinate dehydrogenase, to the physiological keto form of oxaloacetate. It is thereby required to maximize aerobic respiration efficiency by preventing succinate dehydrogenase inhibition. Also acts as a weak oxaloacetate decarboxylase (ODx), catalyzing the decarboxylation of oxaloacetate (OAA) to pyruvate and CO(2), and as such is likely a regulatory enzyme in the TCA cycle. Also displays acylpyruvase activity, being able to hydrolyze acetylpyruvate and fumarylpyruvate in vitro. This chain is Oxaloacetate tautomerase FAHD1, mitochondrial (FAHD1), found in Pongo abelii (Sumatran orangutan).